The chain runs to 1113 residues: Sterol regulatory element binding protein sbp-1 (1113 aa).

Residues 1–52 (MNEEFEGDVPMSDPFLSLVTKLDDIAPFPNNDPLDFDMEHNWQEPGPSQQPD) are transcriptional activation (acidic). 4 disordered regions span residues 24-68 (DIAP…EYYD), 101-132 (LGGG…TSPP), 206-274 (SPYD…SPQN), and 290-345 (EVER…SQGT). The span at 229–238 (PHHHHHHPMP) shows a compositional bias: basic residues. A compositionally biased stretch (acidic residues) spans 324–337 (AEGDEDEDDEDSDS). The segment at 355–368 (ERRTAHNLIEKKYR) is basic motif. The 51-residue stretch at 355–405 (ERRTAHNLIEKKYRCSINDRIQQLKVLLCGDEAKLSKSATLRRAIEHIEEV) folds into the bHLH domain. The tract at residues 369 to 405 (CSINDRIQQLKVLLCGDEAKLSKSATLRRAIEHIEEV) is helix-loop-helix motif. Positions 395–422 (LRRAIEHIEEVEHENQVLKHHVEQMRKT) form a coiled coil. The disordered stretch occupies residues 437–472 (TEYSARSPVESSPSPPRNERKRSRMSTTTPMKNGTR). The next 2 helical transmembrane spans lie at 478-498 (VTLF…LLAG) and 541-561 (MSYV…KLLI).

In terms of processing, processed in the Golgi apparatus, releasing the protein from the membrane. Post-translationally, ubiquitinated; the nuclear form has a rapid turnover and is rapidly ubiquitinated and degraded by the proteasome in the nucleus. In terms of tissue distribution, broadly expressed, including many cells in the head. Expressed in the intestine.

It localises to the nucleus. It is found in the endoplasmic reticulum membrane. Transcription factor involved in maintaining normal fat levels. Regulates the expression of genes involved in lipid metabolism in response to nutrient availability, such as the fatty-acid desaturases fat-5, fat-6 and fat-7. In response to a high-glucose diet, promotes fatty acid synthesis, elongation and desaturation, acting in concert with transcription factor mxl-3. Plays a role in synthesis of monomethyl branched-chain fatty acids (mmBCFAs) as well as other very-long-chain fatty acids. Downstream of the cis-Golgi membrane protein eas-1/GOLT1B and the E3 ubiquitin ligase rnf-145/RNF145, plays a role in the regulation of glial size, perhaps by modulating synthesis of long-chain polyunsaturated fatty-acids (LC-PUFA). Modulates expression of genes in the one-carbon cycle, which produces the methyl donor S-adenosylmethionine (SAM). Probably involved in a feedback loop in which decreased levels of SAM lead to increased transcriptional activity of sbp-1, thereby causing lipid accumulation. Involved in the negative regulation of zinc homeostasis. Involved in the response to simulated microgravity, in concert with Mediator complex subunit mdt-15, probably acting in the intestine. Plays a role in transgenerational lipid accumulation in response to a high-fat diet, probably acting by upregulating wdr-5.1 expression to increase the level of trimethylated 'Lys-4' histone H3 (H3K4me3), which may then induce the expression of fat-5, fat-6 and fat-7. May act as an oxygen sensor for lipid metabolism. Functionally, precursor of the transcription factor form, which is embedded in the endoplasmic reticulum membrane. Processing of this form allows release of the transcription factor form that translocates into the nucleus and activates transcription of genes involved in sterol biosynthesis and lipid homeostasis. Its function is as follows. Key transcription factor that regulates expression of genes involved in sterol biosynthesis and lipid homeostasis. The polypeptide is Sterol regulatory element binding protein sbp-1 (Caenorhabditis elegans).